The chain runs to 210 residues: Glutathione S-transferase P (210 aa).

In terms of domain architecture, GST N-terminal spans 2-81; that stretch reads PPYTVVYFPV…HLGRTLGLYG (80 aa). Tyr4 bears the Phosphotyrosine; by EGFR mark. Residues Tyr8, Arg14, Trp39, Lys45, and 52 to 53 contribute to the glutathione site; that span reads QL. Position 62 is a phosphothreonine (Thr62). Residue 65-66 coordinates glutathione; it reads QS. A GST C-terminal domain is found at 83-204; the sequence is DQREAALVDM…ASPEHVNLPI (122 aa). Lys103 and Lys116 each carry N6-succinyllysine. Lys128 carries the post-translational modification N6-acetyllysine.

It belongs to the GST superfamily. Pi family. In terms of assembly, homodimer. Interacts with CDK5.

The protein resides in the cytoplasm. It is found in the mitochondrion. It localises to the nucleus. The catalysed reaction is RX + glutathione = an S-substituted glutathione + a halide anion + H(+). The enzyme catalyses prostaglandin J2 + glutathione = prostaglandin J2-S-(R)-glutathione. It catalyses the reaction prostaglandin J2 + glutathione = prostaglandin J2-S-(S)-glutathione. It carries out the reaction prostaglandin A2 + glutathione = prostaglandin A2-S-(S)-glutathione. The catalysed reaction is 11(S)-hydroxy-14(S),15(S)-epoxy-(5Z,8Z,12E)-eicosatrienoate + glutathione = (11S,15S)-dihydroxy-14(R)-S-glutathionyl-(5Z,8Z,12E)-eicosatrienoate. Its function is as follows. Conjugation of reduced glutathione to a wide number of exogenous and endogenous hydrophobic electrophiles. Involved in the formation of glutathione conjugates of both prostaglandin A2 (PGA2) and prostaglandin J2 (PGJ2). Participates in the formation of novel hepoxilin regioisomers. Negatively regulates CDK5 activity via p25/p35 translocation to prevent neurodegeneration. This Macaca mulatta (Rhesus macaque) protein is Glutathione S-transferase P (GSTP1).